The primary structure comprises 74 residues: Anaphase-promoting complex subunit 13 (74 aa).

A disordered region spans residues 33-53 (LNELPDPEQDNGGTTESVKEQ).

This sequence belongs to the APC13 family. The mammalian APC/C is composed at least of 14 distinct subunits ANAPC1, ANAPC2, CDC27/APC3, ANAPC4, ANAPC5, CDC16/APC6, ANAPC7, CDC23/APC8, ANAPC10, ANAPC11, CDC26/APC12, ANAPC13, ANAPC15 and ANAPC16 that assemble into a complex of at least 19 chains with a combined molecular mass of around 1.2 MDa; APC/C interacts with FZR1 and FBXO5.

The protein localises to the nucleus. It functions in the pathway protein modification; protein ubiquitination. Functionally, component of the anaphase promoting complex/cyclosome (APC/C), a cell cycle-regulated E3 ubiquitin ligase that controls progression through mitosis and the G1 phase of the cell cycle. The APC/C complex acts by mediating ubiquitination and subsequent degradation of target proteins: it mainly mediates the formation of 'Lys-11'-linked polyubiquitin chains and, to a lower extent, the formation of 'Lys-48'- and 'Lys-63'-linked polyubiquitin chains. The APC/C complex catalyzes assembly of branched 'Lys-11'-/'Lys-48'-linked branched ubiquitin chains on target proteins. This Pongo abelii (Sumatran orangutan) protein is Anaphase-promoting complex subunit 13 (ANAPC13).